The chain runs to 401 residues: Argininosuccinate synthase (401 aa).

Residues 10–18 and Ala-37 each bind ATP; that span reads AYSGGLDTS. Tyr-89 contributes to the L-citrulline binding site. An ATP-binding site is contributed by Gly-119. L-aspartate is bound by residues Thr-121, Asn-125, and Asp-126. Asn-125 is an L-citrulline binding site. L-citrulline is bound by residues Arg-129, Ser-178, Ser-187, Glu-263, and Tyr-275.

The protein belongs to the argininosuccinate synthase family. Type 1 subfamily. Homotetramer.

The protein localises to the cytoplasm. It carries out the reaction L-citrulline + L-aspartate + ATP = 2-(N(omega)-L-arginino)succinate + AMP + diphosphate + H(+). Its pathway is amino-acid biosynthesis; L-arginine biosynthesis; L-arginine from L-ornithine and carbamoyl phosphate: step 2/3. The chain is Argininosuccinate synthase from Buchnera aphidicola subsp. Schizaphis graminum (strain Sg).